A 325-amino-acid chain; its full sequence is Biotin synthase (325 aa).

In terms of domain architecture, Radical SAM core spans 42–270 (YKVQLASLLS…QSRVRLSAGR (229 aa)). [4Fe-4S] cluster is bound by residues C57, C61, and C64. Residues C101, C133, C193, and R265 each coordinate [2Fe-2S] cluster.

Belongs to the radical SAM superfamily. Biotin synthase family. In terms of assembly, homodimer. [4Fe-4S] cluster is required as a cofactor. It depends on [2Fe-2S] cluster as a cofactor.

It catalyses the reaction (4R,5S)-dethiobiotin + (sulfur carrier)-SH + 2 reduced [2Fe-2S]-[ferredoxin] + 2 S-adenosyl-L-methionine = (sulfur carrier)-H + biotin + 2 5'-deoxyadenosine + 2 L-methionine + 2 oxidized [2Fe-2S]-[ferredoxin]. It functions in the pathway cofactor biosynthesis; biotin biosynthesis; biotin from 7,8-diaminononanoate: step 2/2. Its function is as follows. Catalyzes the conversion of dethiobiotin (DTB) to biotin by the insertion of a sulfur atom into dethiobiotin via a radical-based mechanism. This chain is Biotin synthase, found in Synechococcus sp. (strain WH7803).